Consider the following 474-residue polypeptide: E3 ubiquitin-protein ligase RNF14 (474 aa).

One can recognise an RWD domain in the interval 11 to 137 (DELLALASIY…QFLKEETLAY (127 aa)). The short motif at 37-45 (RIYLDLPQN) is the D-box element. Positions 216–457 (KLFLCSICFC…DPGSPCFNRL (242 aa)) are TRIAD supradomain. Zn(2+)-binding residues include C220, C223, C238, H240, C243, C246, C265, C270, C309, C314, C329, C332, C337, C340, and H345. Residues 220 to 270 (CSICFCEKLGSECMYFLECRHVYCKACLKDYFEIQIRDGQVQCLNCPEPKC) form an RING-type 1 zinc finger. Residues 289–350 (ARYDRLLLQS…RLTYHGVSPC (62 aa)) form an IBR-type zinc finger. At S348 the chain carries Phosphoserine. C350 is a Zn(2+) binding site. Positions 351–395 (KVTAEKLMDLRNEYLQADEANKRLLDQRYGKRVIQKALEEMESKE) form a coiled coil. Residues 361 to 474 (RNEYLQADEA…DDIWEDEVED (114 aa)) form an interaction with androgen receptor region. Zn(2+)-binding residues include C404 and C407. An RING-type 2; atypical zinc finger spans residues 404-433 (CPCCGTPIEKLDGCNKMTCTGCMQYFCWIC). The active site involves C417. Zn(2+) contacts are provided by C422, C425, C430, C433, H445, and C453.

This sequence belongs to the RBR family. RNF14 subfamily. As to quaternary structure, interacts with GCN1; interaction takes place in response to ribosome collisions and is required for ubiquitination of EEF1A1/eEF1A. Interacts with the ubiquitin-conjugating enzymes UBE2E1 and UBE2E2. Interacts with AR/androgen receptor. Interacts with TCF7/TCF1, TCF7L1/TCF3 and TCF7L2/TCF4; promoting Wnt signaling. In terms of processing, RING-type zinc finger-dependent and UBE2E2-dependent autoubiquitination. As to expression, widely expressed.

The protein resides in the cytoplasm. It localises to the nucleus. The catalysed reaction is [E2 ubiquitin-conjugating enzyme]-S-ubiquitinyl-L-cysteine + [acceptor protein]-L-lysine = [E2 ubiquitin-conjugating enzyme]-L-cysteine + [acceptor protein]-N(6)-ubiquitinyl-L-lysine.. The protein operates within protein modification; protein ubiquitination. In terms of biological role, E3 ubiquitin-protein ligase that plays a key role in the RNF14-RNF25 translation quality control pathway, a pathway that takes place when a ribosome has stalled during translation, and which promotes ubiquitination and degradation of translation factors on stalled ribosomes. Recruited to stalled ribosomes by the ribosome collision sensor GCN1 and mediates 'Lys-6'-linked ubiquitination of target proteins, leading to their degradation. Mediates ubiquitination of EEF1A1/eEF1A and ETF1/eRF1 translation factors on stalled ribosomes, leading to their degradation. Also catalyzes ubiquitination of ribosomal proteins RPL0, RPL1, RPL12, RPS13 and RPS17. Specifically required to resolve RNA-protein cross-links caused by reactive aldehydes, which trigger translation stress by stalling ribosomes: acts by catalying 'Lys-6'-linked ubiquitination of RNA-protein cross-links, leading to their removal by the ATP-dependent unfoldase VCP and subsequent degradation by the proteasome. Independently of its function in the response to stalled ribosomes, acts as a regulator of transcription in Wnt signaling via its interaction with TCF transcription factors (TCF7/TCF1, TCF7L1/TCF3 and TCF7L2/TCF4). May also play a role as a coactivator for androgen- and, to a lesser extent, progesterone-dependent transcription. The protein is E3 ubiquitin-protein ligase RNF14 of Homo sapiens (Human).